Consider the following 167-residue polypeptide: Signal peptidase complex catalytic subunit SEC11 (167 aa).

Over 1 to 12 the chain is Cytoplasmic; sequence MNLRLELTRFLK. A helical; Signal-anchor for type II membrane protein transmembrane segment spans residues 13–30; the sequence is LCFVLSSAFMFWKGLSIA. At 31-167 the chain is on the lumenal side; that stretch reads TNSHSPIVVV…LGISALLSNE (137 aa). Residues Ser44, His83, and Asp109 each act as charge relay system in the active site. Positions 153-164 are C-terminal short (CTS) helix; the sequence is ALMGFLGISALL.

Belongs to the peptidase S26B family. In terms of assembly, component of the signal peptidase complex (SPC) composed of a catalytic subunit SEC11 and three accessory subunits SPC1, SPC2 and SPC3. The complex induces a local thinning of the ER membrane which is used to measure the length of the signal peptide (SP) h-region of protein substrates. This ensures the selectivity of the complex towards h-regions shorter than 18-20 amino acids. SPC associates with the translocon complex.

The protein localises to the endoplasmic reticulum membrane. It catalyses the reaction Cleavage of hydrophobic, N-terminal signal or leader sequences from secreted and periplasmic proteins.. Its function is as follows. Catalytic component of the signal peptidase complex (SPC) which catalyzes the cleavage of N-terminal signal sequences from nascent proteins as they are translocated into the lumen of the endoplasmic reticulum. Specifically cleaves N-terminal signal peptides that contain a hydrophobic alpha-helix (h-region) shorter than 18-20 amino acids. The protein is Signal peptidase complex catalytic subunit SEC11 (SEC11) of Zygosaccharomyces rouxii (strain ATCC 2623 / CBS 732 / NBRC 1130 / NCYC 568 / NRRL Y-229).